A 494-amino-acid polypeptide reads, in one-letter code: Probable terminase, large subunit (494 aa).

Residue 26-33 (ADVLFGKT) participates in ATP binding. The Walker A motif signature appears at 56–63 (SGHGTGKS). The Walker B motif signature appears at 158-163 (LYIIDE). Residue Glu163 is the For ATPase activity of the active site. 3 residues coordinate Mg(2+): Asp293, Asp356, and Asp446.

This sequence belongs to the punalikevirus large terminase family. Interacts with pacA protein. Requires Mg(2+) as cofactor.

In terms of biological role, component of the molecular motor that translocates genomic DNA in empty capsid during DNA packaging. Heterooligomerize with small terminase protein to be docked on capsid portal protein. Forms a ring-like structure through which genomic DNA is translocated into the capsid. May have or induce an endonuclease activity to cleave the genome concatemer after encapsidation. This Escherichia coli (Bacteriophage P7) protein is Probable terminase, large subunit (pacB).